Reading from the N-terminus, the 387-residue chain is 3-ketoacyl-CoA thiolase (387 aa).

C91 (acyl-thioester intermediate) is an active-site residue. Residues H343 and C373 each act as proton acceptor in the active site.

It belongs to the thiolase-like superfamily. Thiolase family. In terms of assembly, heterotetramer of two alpha chains (FadB) and two beta chains (FadA).

It localises to the cytoplasm. The catalysed reaction is an acyl-CoA + acetyl-CoA = a 3-oxoacyl-CoA + CoA. Its pathway is lipid metabolism; fatty acid beta-oxidation. Its function is as follows. Catalyzes the final step of fatty acid oxidation in which acetyl-CoA is released and the CoA ester of a fatty acid two carbons shorter is formed. This is 3-ketoacyl-CoA thiolase from Vibrio vulnificus (strain YJ016).